We begin with the raw amino-acid sequence, 1147 residues long: Disease resistance protein RPP4 (1147 aa).

In terms of domain architecture, TIR spans 11 to 175; sequence RRYDVFPSFS…KIANDVSNKL (165 aa). Glu-86 is a catalytic residue. One can recognise an NB-ARC domain in the interval 189–446; the sequence is EDHIKAIKSI…CFFNGFKVSN (258 aa). LRR repeat units lie at residues 548 to 573, 584 to 606, 608 to 629, 630 to 653, 655 to 676, 698 to 721, 722 to 743, 744 to 766, 767 to 790, 792 to 813, 814 to 836, 837 to 860, 926 to 950, 952 to 973, 974 to 996, 997 to 1017, 1018 to 1042, and 1044 to 1064; these read MRNL…LWSK, PLKL…TFKA, YLVN…TLPL, GSLK…SLAI, LEEL…IQNA, MCNL…IYLP, RKLK…NFKA, EYLV…TQPL, LERL…IQNA, TKLI…DLNL, ESLE…KMGC, LGSL…SKAT, LKRL…IGNL, HRLV…DVNL, SSLI…PLIS, TRIE…DLTR, and SVLL…IFRL.

Interacts with RSH1.

It carries out the reaction NAD(+) + H2O = ADP-D-ribose + nicotinamide + H(+). Functionally, TIR-NB-LRR receptor-like protein that confers resistance to the pathogen Hyaloperonospora arabidopsis isolates Emoy2 and Emwa1 (downy mildew disease). Plays a role in the regulation of temperature response during plant growth and survival. This chain is Disease resistance protein RPP4, found in Arabidopsis thaliana (Mouse-ear cress).